The following is a 663-amino-acid chain: Transmembrane 9 superfamily member 2 (663 aa).

The N-terminal stretch at 1–28 (MSARLPVLSPPRWPRLLLLSLLLLGAVP) is a signal peptide. Residues 29–300 (GPRRSGGFYL…LESMPHTHIQ (272 aa)) lie on the Lumenal side of the membrane. A helical transmembrane segment spans residues 301–321 (WFSIMNSLVIVLFLSGMVAMI). Over 322–374 (MLRTLHKDIARYNQMDSTEDAQEEFGWKLVHGDIFRPPRKGMLLSVFLGSGTQ) the chain is Cytoplasmic. Residues 375 to 395 (ILIMTFVTLFFACLGFLSPAN) traverse the membrane as a helical segment. At 396–398 (RGA) the chain is on the lumenal side. Residues 399–419 (LMTCAVVLWVLLGTPAGYVAA) traverse the membrane as a helical segment. At 420–437 (RFYKSFGGEKWKTNVLLT) the chain is on the cytoplasmic side. The helical transmembrane segment at 438–458 (SFLCPGIVFADFFIMNLILWG) threads the bilayer. Over 459–466 (EGSSAAIP) the chain is Lumenal. A helical transmembrane segment spans residues 467–487 (FGTLVAILALWFCISVPLTFI). The Cytoplasmic segment spans residues 488–522 (GAYFGFKKNAIEHPVRTNQIPRQIPEQSFYTKPLP). Residues 523–543 (GIIMGGILPFGCIFIQLFFIL) form a helical membrane-spanning segment. The Lumenal portion of the chain corresponds to 544-554 (NSIWSHQMYYM). A helical membrane pass occupies residues 555-575 (FGFLFLVFIILVITCSEATIL). Residues 576–591 (LCYFHLCAEDYHWQWR) are Cytoplasmic-facing. Residues 592–612 (SFLTSGFTAVYFLIYAVHYFF) form a helical membrane-spanning segment. The Lumenal segment spans residues 613-631 (SKLQITGTASTILYFGYTM). A helical membrane pass occupies residues 632 to 652 (IMVLIFFLFTGTIGFFACFWF). The Cytoplasmic segment spans residues 653 to 663 (VTKIYSVVKVD).

The protein belongs to the nonaspanin (TM9SF) (TC 9.A.2) family.

The protein resides in the endosome membrane. Its subcellular location is the golgi outpost. It localises to the cytoplasm. It is found in the cytoskeleton. The protein localises to the microtubule organizing center. In the intracellular compartments, may function as a channel or small molecule transporter. The sequence is that of Transmembrane 9 superfamily member 2 (TM9SF2) from Pongo abelii (Sumatran orangutan).